The chain runs to 184 residues: Photosystem I assembly protein Ycf4 (184 aa).

2 consecutive transmembrane segments (helical) span residues 22–42 (FCWAFILFLGSLGFLLVGISS) and 57–77 (IIFFPQGIVMSFYGIAGLFIS).

The protein belongs to the Ycf4 family.

It localises to the plastid. It is found in the chloroplast thylakoid membrane. Its function is as follows. Seems to be required for the assembly of the photosystem I complex. This is Photosystem I assembly protein Ycf4 from Ipomoea purpurea (Common morning glory).